The chain runs to 156 residues: Ribosomal RNA large subunit methyltransferase H (156 aa).

S-adenosyl-L-methionine-binding positions include L73, G104, and 123 to 128 (ISSMTL).

This sequence belongs to the RNA methyltransferase RlmH family. As to quaternary structure, homodimer.

It localises to the cytoplasm. The catalysed reaction is pseudouridine(1915) in 23S rRNA + S-adenosyl-L-methionine = N(3)-methylpseudouridine(1915) in 23S rRNA + S-adenosyl-L-homocysteine + H(+). Functionally, specifically methylates the pseudouridine at position 1915 (m3Psi1915) in 23S rRNA. In Janthinobacterium sp. (strain Marseille) (Minibacterium massiliensis), this protein is Ribosomal RNA large subunit methyltransferase H.